Consider the following 975-residue polypeptide: Glycine dehydrogenase (decarboxylating) (975 aa).

Lys723 carries the N6-(pyridoxal phosphate)lysine modification.

This sequence belongs to the GcvP family. As to quaternary structure, the glycine cleavage system is composed of four proteins: P, T, L and H. It depends on pyridoxal 5'-phosphate as a cofactor.

It carries out the reaction N(6)-[(R)-lipoyl]-L-lysyl-[glycine-cleavage complex H protein] + glycine + H(+) = N(6)-[(R)-S(8)-aminomethyldihydrolipoyl]-L-lysyl-[glycine-cleavage complex H protein] + CO2. Its function is as follows. The glycine cleavage system catalyzes the degradation of glycine. The P protein binds the alpha-amino group of glycine through its pyridoxal phosphate cofactor; CO(2) is released and the remaining methylamine moiety is then transferred to the lipoamide cofactor of the H protein. The polypeptide is Glycine dehydrogenase (decarboxylating) (Burkholderia vietnamiensis (strain G4 / LMG 22486) (Burkholderia cepacia (strain R1808))).